The chain runs to 201 residues: Large ribosomal subunit protein uL4 (201 aa).

The disordered stretch occupies residues 46–71 (QKTRAEITGTGKKPWRQKGTGRARAG).

The protein belongs to the universal ribosomal protein uL4 family. Part of the 50S ribosomal subunit.

Functionally, one of the primary rRNA binding proteins, this protein initially binds near the 5'-end of the 23S rRNA. It is important during the early stages of 50S assembly. It makes multiple contacts with different domains of the 23S rRNA in the assembled 50S subunit and ribosome. Its function is as follows. Forms part of the polypeptide exit tunnel. The chain is Large ribosomal subunit protein uL4 from Shewanella amazonensis (strain ATCC BAA-1098 / SB2B).